A 387-amino-acid chain; its full sequence is Putative F-box protein At1g47800 (387 aa).

The F-box domain maps to 8-54 (LQSLDHIPIDVLFEILVKLPAKSVARFLCVSKVWATMIRGEVFIRSF).

The polypeptide is Putative F-box protein At1g47800 (Arabidopsis thaliana (Mouse-ear cress)).